A 572-amino-acid polypeptide reads, in one-letter code: MRTSQYLLSTLKETPADAEVISHQLMLRAGMIRKLASGLYTWLPTGLRVLKKVENIVREEMNNAGAIEVSMPVVQPADLWQESGRWEQYGPELLRFVDRGERPFVLGPTHEEVITDLIRNELSSYKQLPLNFFQIQTKFRDEVRPRFGVMRSREFLMKDAYSFHTSQESLQETYDAMYAAYSKIFSRMGLDFRAVQADTGSIGGNASHEFQVLAQSGEDDVIFSDSSDYAANIEFAEAVAPKAPRAAASQEMTLVDTPNAKTIAELVEQFNLPIEKTVKTLLVKAVEGSSYPLVALLVRGDHELNEVKAEKLPQVASPLTFATEEEIRALVKAGPGSLGPVNMPVPVVIDRTVAVMSDFAAGANIDGKHYFGINWDRDVATPEVADIRNVVAGDPSPDGQGTLLIKRGIEVGHIFQLGTKYSEALKASVQGEDGRNQILTMGCYGIGVTRVVAAAIEQNYDERGIVWPDAIAPFQVAILPMNMHKSFRVQELAEKLYGELRAQGIEVLMDDRKERPGVMFADMELIGIPHTIVLGDRNLDNDDIEYKYRRNGEKQLIKTGEIVDFLVKAIKG.

Belongs to the class-II aminoacyl-tRNA synthetase family. ProS type 1 subfamily. Homodimer.

It is found in the cytoplasm. It carries out the reaction tRNA(Pro) + L-proline + ATP = L-prolyl-tRNA(Pro) + AMP + diphosphate. Its function is as follows. Catalyzes the attachment of proline to tRNA(Pro) in a two-step reaction: proline is first activated by ATP to form Pro-AMP and then transferred to the acceptor end of tRNA(Pro). As ProRS can inadvertently accommodate and process non-cognate amino acids such as alanine and cysteine, to avoid such errors it has two additional distinct editing activities against alanine. One activity is designated as 'pretransfer' editing and involves the tRNA(Pro)-independent hydrolysis of activated Ala-AMP. The other activity is designated 'posttransfer' editing and involves deacylation of mischarged Ala-tRNA(Pro). The misacylated Cys-tRNA(Pro) is not edited by ProRS. The sequence is that of Proline--tRNA ligase from Citrobacter koseri (strain ATCC BAA-895 / CDC 4225-83 / SGSC4696).